Reading from the N-terminus, the 1111-residue chain is Probable arabinosyltransferase A (1111 aa).

Transmembrane regions (helical) follow at residues 12–34 (IIRL…VPLL), 205–224 (IAVG…LSAL), 333–355 (VWMR…HWVL), 370–387 (VAVL…LPFN), 394–413 (PLIA…AIAL), 423–445 (AVVA…ALLT), 462–484 (GLLA…VFHS), 530–547 (FPVL…VVLL), 554–576 (GLAS…LLTF), 581–603 (WAIQ…AFAF), 615–637 (TVYI…GWFG), 652–674 (IAGH…LAGG), and 695–717 (FLAT…GSLA). The tract at residues 804-831 (GLVNSDASPNKPNVTFSDSAGTAGGKGP) is disordered. The segment covering 808–823 (SDASPNKPNVTFSDSA) has biased composition (polar residues).

The protein belongs to the emb family.

The protein resides in the cell membrane. Functionally, arabinosyl transferase responsible for the polymerization of arabinose into the arabinan of arabinogalactan. The chain is Probable arabinosyltransferase A (embA) from Mycobacterium leprae (strain TN).